Consider the following 181-residue polypeptide: Adenylate kinase (181 aa).

An ATP-binding site is contributed by 10-15; sequence GAGKGT. An NMP region spans residues 30–59; it reads STGDLFRANISQGTELGKQAQEYMDAGKLV. AMP contacts are provided by residues Thr-31, Arg-36, 57–59, 85–88, and Gln-92; these read KLV and GFPR. Residues 126-132 form an LID region; the sequence is SRGRNDD. Arg-127 is an ATP binding site. AMP-binding residues include Arg-129 and Arg-140. Gly-166 provides a ligand contact to ATP.

It belongs to the adenylate kinase family. In terms of assembly, monomer.

The protein resides in the cytoplasm. It carries out the reaction AMP + ATP = 2 ADP. Its pathway is purine metabolism; AMP biosynthesis via salvage pathway; AMP from ADP: step 1/1. Catalyzes the reversible transfer of the terminal phosphate group between ATP and AMP. Plays an important role in cellular energy homeostasis and in adenine nucleotide metabolism. The protein is Adenylate kinase of Corynebacterium urealyticum (strain ATCC 43042 / DSM 7109).